Consider the following 30-residue polypeptide: M-poneritoxin-Nc3a (30 aa).

This sequence belongs to the ponericin-G family. In terms of tissue distribution, expressed by the venom gland.

The protein localises to the secreted. It is found in the target cell membrane. Functionally, membrane-perturbating peptide with multiple activities. It is insecticidal, since it induces contractile paralysis in insects (L.cuprina) during several hours and death after 24 hours. It shows a relatively strong and broad-spectrum antibacterial activity against both Gram-positive and Gram-negative bacteria (MIC&lt;20 uM). It is also antiparasitic, since it potently inhibits the larval development of the major pathogenic nematode of ruminants (H.contortus, IC(50)=5.6 uM) and reduces the motility of adult males of the other nematode B.malayi. It also shows cytotoxic activity against HEK293 cells (EC(50)=5-7 uM) but does not induce hemolysis in human erythrocytes. In addition, it causes a moderate increase in intracellular calcium concentration on neuronal and epithelial cell lines, which supports a non-specific membrane perturbation mechanism of action. In vivo, it induces pain by intraplantar injection into mice, suggesting a defensive function against vertebrate predators. This is M-poneritoxin-Nc3a from Neoponera commutata (Large hunting ant).